A 129-amino-acid chain; its full sequence is Small ribosomal subunit protein eS6 (129 aa).

The protein belongs to the eukaryotic ribosomal protein eS6 family.

This Methanocorpusculum labreanum (strain ATCC 43576 / DSM 4855 / Z) protein is Small ribosomal subunit protein eS6.